The primary structure comprises 357 residues: Peptide chain release factor 1 (357 aa).

An N5-methylglutamine modification is found at Gln235. Basic and acidic residues predominate over residues 282-294 (RQKADTERSESRR). Residues 282–308 (RQKADTERSESRRSQVGSGDRSERIRT) form a disordered region.

This sequence belongs to the prokaryotic/mitochondrial release factor family. In terms of processing, methylated by PrmC. Methylation increases the termination efficiency of RF1.

The protein resides in the cytoplasm. Functionally, peptide chain release factor 1 directs the termination of translation in response to the peptide chain termination codons UAG and UAA. This is Peptide chain release factor 1 from Brucella anthropi (strain ATCC 49188 / DSM 6882 / CCUG 24695 / JCM 21032 / LMG 3331 / NBRC 15819 / NCTC 12168 / Alc 37) (Ochrobactrum anthropi).